Reading from the N-terminus, the 268-residue chain is Tryptophan synthase alpha chain (268 aa).

Catalysis depends on proton acceptor residues E49 and D60.

The protein belongs to the TrpA family. Tetramer of two alpha and two beta chains.

It catalyses the reaction (1S,2R)-1-C-(indol-3-yl)glycerol 3-phosphate + L-serine = D-glyceraldehyde 3-phosphate + L-tryptophan + H2O. The protein operates within amino-acid biosynthesis; L-tryptophan biosynthesis; L-tryptophan from chorismate: step 5/5. Functionally, the alpha subunit is responsible for the aldol cleavage of indoleglycerol phosphate to indole and glyceraldehyde 3-phosphate. This chain is Tryptophan synthase alpha chain, found in Vibrio vulnificus (strain YJ016).